We begin with the raw amino-acid sequence, 178 residues long: Probable major fimbrial subunit LpfA (178 aa).

The N-terminal stretch at 1-24 (MEFFMKKVVFALTALALTSGTVFA) is a signal peptide.

The protein belongs to the fimbrial protein family.

It is found in the fimbrium. Its function is as follows. Part of the lpfABCC'DE fimbrial operon. LP fimbriae may participate in the interaction with eukaryotic cells by assisting in microcolony formation. This chain is Probable major fimbrial subunit LpfA (lpfA), found in Escherichia coli O157:H7.